We begin with the raw amino-acid sequence, 794 residues long: DNA ligase (794 aa).

Residues 35–39, 84–85, and Glu-126 each bind NAD(+); these read DAEYD and SL. Lys-128 acts as the N6-AMP-lysine intermediate in catalysis. 4 residues coordinate NAD(+): Arg-149, Glu-186, Lys-302, and Lys-326. Zn(2+) contacts are provided by Cys-420, Cys-423, Cys-450, and Cys-456. In terms of domain architecture, BRCT spans 711–794; that stretch reads VEGLPLAGQT…KLFDEHGVAR (84 aa).

Belongs to the NAD-dependent DNA ligase family. LigA subfamily. Mg(2+) serves as cofactor. It depends on Mn(2+) as a cofactor.

The enzyme catalyses NAD(+) + (deoxyribonucleotide)n-3'-hydroxyl + 5'-phospho-(deoxyribonucleotide)m = (deoxyribonucleotide)n+m + AMP + beta-nicotinamide D-nucleotide.. DNA ligase that catalyzes the formation of phosphodiester linkages between 5'-phosphoryl and 3'-hydroxyl groups in double-stranded DNA using NAD as a coenzyme and as the energy source for the reaction. It is essential for DNA replication and repair of damaged DNA. This chain is DNA ligase, found in Pseudomonas aeruginosa (strain UCBPP-PA14).